The following is a 502-amino-acid chain: Protein IWS1 homolog 1 (502 aa).

Residues 1 to 12 are compositionally biased toward basic and acidic residues; the sequence is MGFEDDPYRDVD. 2 disordered regions span residues 1–61 and 87–208; these read MGFE…DNDK and DEDV…DEDE. Composition is skewed to acidic residues over residues 13 to 22, 34 to 49, and 87 to 97; these read GEPIVDFDDF, QDFD…DWDG, and DEDVDDAEFDE. 2 stretches are compositionally biased toward basic and acidic residues: residues 138-151 and 181-194; these read NRGE…DEMW and PSER…DRSP. Residue Tyr185 is modified to Phosphotyrosine. The 84-residue stretch at 287-370 folds into the TFIIS N-terminal domain; sequence TLLKNWLEPL…DKWSRPIFNK (84 aa). The disordered stretch occupies residues 385–434; that stretch reads VPYRRPPVKKPSNKATMESRDGDFDLEIRERKTGLTSGQSSRGDRQMTMR. A compositionally biased stretch (basic and acidic residues) spans 401–417; sequence MESRDGDFDLEIRERKT.

This sequence belongs to the IWS1 family. Interacts with BZR2/BES1 and SPT6 (via N-terminus). Interacts with ASHH2/SDG8.

It is found in the nucleus. In terms of biological role, transcription factor involved in RNA polymerase II (RNAPII) transcription regulation. Involved in transcription elongation. May function at post-recruitment and elongation steps of transcription. May be recruited by BZR2/BES1 to target genes and promote their expression during transcription elongation process. Required for brassinosteroid (BR)-induced gene expression. Required the for regulation of numerous nitrogen-responsive genes in roots. Acts in roots to repress NRT2.1 transcription in response to high nitrogen supply. This repression is associated with an IWS1-dependent increase of trimethylation on 'Lys-27' H3K27me3 at the NRT2.1 locus. In Arabidopsis thaliana (Mouse-ear cress), this protein is Protein IWS1 homolog 1.